Reading from the N-terminus, the 465-residue chain is Beta-1,2-xylosyltransferase XYXT1 (465 aa).

Over 1 to 11 (MKAAVRSKKSK) the chain is Cytoplasmic. Residues 12-32 (GSFCHPPLLLLIVAIQFLVIY) form a helical; Signal-anchor for type II membrane protein membrane-spanning segment. At 33–465 (SPTLDQYMVM…VLLKALHLLR (433 aa)) the chain is on the lumenal side. Asparagine 80, asparagine 118, asparagine 125, asparagine 266, and asparagine 403 each carry an N-linked (GlcNAc...) asparagine glycan.

This sequence belongs to the glycosyltransferase 61 family. Widely expressed.

The protein resides in the golgi apparatus membrane. It functions in the pathway glycan metabolism. Functionally, glycosyltransferase involved in the xylosylation of xylan, the major hemicellulose (non-cellulosic component) of primary and secondary walls of angiosperms. Possesses beta-1,2-xylosyltransferase activity, transferring xylose from UDP-xylose to the xylan backbone. Catalyzes the addition of 2-O-xylosyl side chains to the xylan backbone. The chain is Beta-1,2-xylosyltransferase XYXT1 from Oryza sativa subsp. japonica (Rice).